The primary structure comprises 165 residues: Disulfide bond formation protein B (165 aa).

Residues 1–10 (MPAWLTNRTI) are Cytoplasmic-facing. The chain crosses the membrane as a helical span at residues 11 to 27 (YFLCFLAIAGLMGFAFY). Residues 28 to 45 (LQYVKDLEPCPLCMAQRI) are Periplasmic-facing. A disulfide bond links C37 and C40. A helical transmembrane segment spans residues 46–62 (AFVLAGLVFLAAALHNP). At 63 to 68 (KNTGTT) the chain is on the cytoplasmic side. A helical transmembrane segment spans residues 69–86 (VYAFLGWVTTLGGAALAT). Residues 87–143 (RQLWLQSLPADQVPACGPGLEYMLEAFPFSEVLTMMLTGTGECAEVQWTFLGLSIPG) are Periplasmic-facing. A disulfide bridge links C102 with C129. Residues 144 to 162 (WTLVAFIGFTAVWAFAWVR) traverse the membrane as a helical segment. The Cytoplasmic segment spans residues 163-165 (RPR).

Belongs to the DsbB family.

It is found in the cell inner membrane. Its function is as follows. Required for disulfide bond formation in some periplasmic proteins. Acts by oxidizing the DsbA protein. The sequence is that of Disulfide bond formation protein B from Hahella chejuensis (strain KCTC 2396).